Here is a 286-residue protein sequence, read N- to C-terminus: MASCNLLVIQTTSIIMFSSLLSRPVNSSYDPSYHFSPVTREIKNDPTSNGVVSTTKNATPLAPSKYDTTIPLKKRYPNLVHNFPKPELDENVILETKKIIDSILNPSDEPTNDINYIKYENPNPNPNPNPNPNQEQQQQSSSSSSKIIQIKQFQEDPMLPPKFKLRKNRHERIIEDVTFVKDLKTKKLTKEDREFWNIPAAVSNWKNSQGFTIGLDKRMIGREHVPIEMNIEKFNDLSTALSDADLQAREDLKQRNEIRQQKQLQEKRLRDEKIKEIANRSKRRRY.

2 disordered regions span residues 111–146 (TNDI…SSSK) and 253–286 (KQRN…RRRY). Residues 132 to 145 (PNQEQQQQSSSSSS) show a composition bias toward low complexity. A compositionally biased stretch (basic and acidic residues) spans 253–279 (KQRNEIRQQKQLQEKRLRDEKIKEIAN).

It belongs to the SNW family. As to quaternary structure, associated with the spliceosome.

It is found in the nucleus. Involved in pre-mRNA splicing. This Candida albicans (strain SC5314 / ATCC MYA-2876) (Yeast) protein is Pre-mRNA-processing protein 45 (PRP45).